Reading from the N-terminus, the 431-residue chain is Enolase (431 aa).

Gln163 serves as a coordination point for (2R)-2-phosphoglycerate. Glu205 acts as the Proton donor in catalysis. Residues Asp242, Glu288, and Asp315 each coordinate Mg(2+). The (2R)-2-phosphoglycerate site is built by Lys340, Arg369, Ser370, and Lys391. The active-site Proton acceptor is Lys340.

It belongs to the enolase family. Requires Mg(2+) as cofactor.

Its subcellular location is the cytoplasm. The protein resides in the secreted. It localises to the cell surface. The catalysed reaction is (2R)-2-phosphoglycerate = phosphoenolpyruvate + H2O. The protein operates within carbohydrate degradation; glycolysis; pyruvate from D-glyceraldehyde 3-phosphate: step 4/5. In terms of biological role, catalyzes the reversible conversion of 2-phosphoglycerate (2-PG) into phosphoenolpyruvate (PEP). It is essential for the degradation of carbohydrates via glycolysis. The chain is Enolase from Bacillus cereus (strain AH187).